The chain runs to 454 residues: Protoheme IX farnesyltransferase 1 (454 aa).

The interval 1–186 (MRTTGFSGLL…AYFELTKPRL (186 aa)) is unknown. Transmembrane regions (helical) follow at residues 9–29 (LLSATVVGVYVLVVVGATAAL), 59–79 (GVAAVVGLLVIATAVVGWSET), 87–107 (LALALALYPAQVVLGALVATG), and 113–133 (LHLFVAMAIFAVLVVGLAWHL). The disordered stretch occupies residues 137–164 (TGSDDAPESPPELAPPVDEEPAATEQPA). Helical transmembrane passes span 186–206 (LMWLLCLVAGAGMVIAGTPTV), 209–229 (VVFTLGGGVLAIGASGTFNHV), 251–271 (VPVANALAFGGLLAVASLWAF), 276–296 (LLAAALGLAAIAFYSVVYTLI), 300–320 (NTVQNTVIGGAAGALPALIGY), 321–341 (AAVTGTIGIGGLVLAAVIFLW), 377–397 (HIVFYLGATLLGAGALAAVTD), 398–418 (LGWLYAATAVLAAGVFLWAVV), and 433–453 (FHASNAYLGLVLVAILIDSLA). Residues 187 to 451 (MWLLCLVAGA…LVLVAILIDS (265 aa)) form a protoheme IX prenyltransferase region.

The protein in the C-terminal section; belongs to the UbiA prenyltransferase family. Protoheme IX farnesyltransferase subfamily.

The protein localises to the cell membrane. The enzyme catalyses heme b + (2E,6E)-farnesyl diphosphate + H2O = Fe(II)-heme o + diphosphate. It functions in the pathway porphyrin-containing compound metabolism; heme O biosynthesis; heme O from protoheme: step 1/1. Its function is as follows. Converts heme B (protoheme IX) to heme O by substitution of the vinyl group on carbon 2 of heme B porphyrin ring with a hydroxyethyl farnesyl side group. The sequence is that of Protoheme IX farnesyltransferase 1 (ctaB1) from Natronomonas pharaonis (strain ATCC 35678 / DSM 2160 / CIP 103997 / JCM 8858 / NBRC 14720 / NCIMB 2260 / Gabara) (Halobacterium pharaonis).